A 715-amino-acid polypeptide reads, in one-letter code: Polyribonucleotide nucleotidyltransferase (715 aa).

Residues Asp-487 and Asp-493 each coordinate Mg(2+). One can recognise a KH domain in the interval 554–613 (PRIETFKIATDKIREVIGTGGKVIREIVEKTGAKVNIDDDGTVKVASSDGESIKAAIKWI). One can recognise an S1 motif domain in the interval 623–691 (NAIYDGTVVK…DRGKTRLSMK (69 aa)). A disordered region spans residues 696 to 715 (ETGEDLEAKQKAAEGATAAE).

The protein belongs to the polyribonucleotide nucleotidyltransferase family. Mg(2+) serves as cofactor.

It is found in the cytoplasm. The catalysed reaction is RNA(n+1) + phosphate = RNA(n) + a ribonucleoside 5'-diphosphate. Involved in mRNA degradation. Catalyzes the phosphorolysis of single-stranded polyribonucleotides processively in the 3'- to 5'-direction. The sequence is that of Polyribonucleotide nucleotidyltransferase from Rhodopseudomonas palustris (strain BisB18).